The primary structure comprises 379 residues: Cystathionine gamma-lyase (379 aa).

The residue at position 195 (Lys-195) is an N6-(pyridoxal phosphate)lysine.

It belongs to the trans-sulfuration enzymes family. Pyridoxal 5'-phosphate is required as a cofactor.

The catalysed reaction is L,L-cystathionine + H2O = 2-oxobutanoate + L-cysteine + NH4(+). It catalyses the reaction L-homocysteine + H2O = 2-oxobutanoate + hydrogen sulfide + NH4(+) + H(+). Catalyzes the conversion of cystathionine to cysteine, and homocysteine to sulfide. The sequence is that of Cystathionine gamma-lyase (mccB) from Bacillus subtilis (strain 168).